The primary structure comprises 557 residues: MDIKRTVLWVIFFMSAVMLFDNWQRSHGRPSMFFPNVTQTNTASNATNGNGASGASAAAANALPAAATGAAPATTAPAAQAQLVRFSTDVYNGEIDTRGGTLAKLTLTKAGDGKQPDLSVTLFDNAANHTYLARTGLLGGDFPNHNDVYTQAAGPTSLAAGQNTLKLAFESPVKGGVKVVKTYTFTRGSYVIGVDTKIENVGTAPVTPSVYMELVRDNTSVETPMFSHTFLGPAVYTDQKHFQKITFSDIDKNKADYVTSADNGWIAMVQHYFASAWIPQQGAKRDIYVEKIDPTLYRVGVKQPVAAIAPGQSADVSARLFAGPEEERMLEGIAPGLELVKDYGWVTIIAKPLFWLLEKIHGFVGNWGWAIVLLTLLIKAVFFPLSAASYKSMARMKEITPRMQALRERFKSDPQKMNAALMELYKTEKVNPFGGCLPVVIQIPVFISLYWVLLASVEMRGAPWILWIHDLSQRDPYFILPVLMAVSMFVQTKLNPTPPDPVQAKMMMFMPIAFSVMFFFFPAGLVLYYVVNNVLSIAQQYYITRTLGAAAAKKKAS.

5 helical membrane-spanning segments follow: residues 3-23 (IKRT…FDNW), 363-383 (FVGN…AVFF), 437-457 (LPVV…LASV), 476-496 (PYFI…KLNP), and 507-527 (MMFM…GLVL).

It belongs to the OXA1/ALB3/YidC family. Type 1 subfamily. As to quaternary structure, interacts with the Sec translocase complex via SecD. Specifically interacts with transmembrane segments of nascent integral membrane proteins during membrane integration.

The protein resides in the cell inner membrane. Functionally, required for the insertion and/or proper folding and/or complex formation of integral membrane proteins into the membrane. Involved in integration of membrane proteins that insert both dependently and independently of the Sec translocase complex, as well as at least some lipoproteins. Aids folding of multispanning membrane proteins. The protein is Membrane protein insertase YidC of Burkholderia thailandensis (strain ATCC 700388 / DSM 13276 / CCUG 48851 / CIP 106301 / E264).